The sequence spans 167 residues: Urease accessory protein UreE (167 aa).

It belongs to the UreE family.

It is found in the cytoplasm. Involved in urease metallocenter assembly. Binds nickel. Probably functions as a nickel donor during metallocenter assembly. This is Urease accessory protein UreE from Pseudomonas aeruginosa (strain UCBPP-PA14).